We begin with the raw amino-acid sequence, 536 residues long: MGSNKSKPKDASQRRRSLEPAENVHGAGGGAFPASQTPSKPASADGHRGPSAAFAPAAAEPKLFGGFNSSDTVTSPQRAGPLAGGVTTFVALYDYESRTETDLSFKKGERLQIVNNTEGDWWLAHSLSTGQTGYIPSNYVAPSDSIQAEEWYFGKITRRESERLLLNAENPRGTFLVRESETTKGAYCLSVSDFDNAKGLNVKHYKIRKLDSGGFYITSRTQFNSLQQLVAYYSKHADGLCHRLTTVCPTSKPQTQGLAKDAWEIPRESLRLEVKLGQGCFGEVWMGTWNGTTRVAIKTLKPGTMSPEAFLQEAQVMKKLRHEKLVQLYAVVSEEPIYIVTEYMSKGSLLDFLKGETGKYLRLPQLVDMAAQIASGMAYVERMNYVHRDLRAANILVGENLVCKVADFGLARLIEDNEYTARQGAKFPIKWTAPEAALYGRFTIKSDVWSFGILLTELTTKGRVPYPGMVNREVLDQVERGYRMPCPPECPESLHDLMCQCWRKEPEERPTFEYLQAFLEDYFTSTEPQYQPGENL.

The tract at residues 1-53 (MGSNKSKPKDASQRRRSLEPAENVHGAGGGAFPASQTPSKPASADGHRGPSAA) is disordered. Gly2 is lipidated: N-myristoyl glycine. Residues 7–19 (KPKDASQRRRSLE) show a composition bias toward basic and acidic residues. At Ser17 the chain carries Phosphoserine. Ser75 carries the phosphoserine; by CDK5 modification. Residues 84–145 (GGVTTFVALY…PSNYVAPSDS (62 aa)) form the SH3 domain. The region spanning 151 to 248 (WYFGKITRRE…GLCHRLTTVC (98 aa)) is the SH2 domain. The residue at position 187 (Tyr187) is a Phosphotyrosine. One can recognise a Protein kinase domain in the interval 270–523 (LRLEVKLGQG…YLQAFLEDYF (254 aa)). Residues 276–284 (LGQGCFGEV) and Lys298 each bind ATP. Catalysis depends on Asp389, which acts as the Proton acceptor. The residue at position 419 (Tyr419) is a Phosphotyrosine; by autocatalysis. Tyr419 bears the Phosphotyrosine; by FAK2 mark. Tyr530 bears the Phosphotyrosine; by CSK mark.

This sequence belongs to the protein kinase superfamily. Tyr protein kinase family. SRC subfamily. As to quaternary structure, part of a complex comprised of PTPRA, BCAR1, BCAR3 (via SH2 domain) and SRC; the formation of the complex is dependent on integrin mediated-tyrosine phosphorylation of PTPRA. Interacts with DDEF1/ASAP1; via the SH3 domain. Interacts with CCPG1. Identified in a complex containing FGFR4, NCAM1, CDH2, PLCG1, FRS2, SRC, SHC1, GAP43 and CTTN. Interacts with ERBB2, STAT1 and PNN. Interacts with DDR1, DDR2 and DAB2. Interacts with CDCP1, TGFB1I1 and TOM1L2. Interacts with the cytoplasmic domain of MUC1, phosphorylates it and increases binding of MUC1 with beta-catenin. Interacts with RALGPS1; via the SH3 domain. Interacts with CAV2 (tyrosine phosphorylated form). Interacts (via the SH3 domain and the protein kinase domain) with ARRB1; the interaction is independent of the phosphorylation state of SRC C-terminus. Interacts with ARRB1 and ARRB2. Interacts with SRCIN1. Interacts with NDFIP2 and more weakly with NDFIP1. Interacts with PIK3CA and/or PIK3C2B, PTK2/FAK1 and ESR1 (dimethylated on arginine). Interacts with FASLG. Interacts (via SH2 domain) with the 'Tyr-402' phosphorylated form of PTK2B/PYK2. Interacts (via SH2 domain) with FLT3 (tyrosine phosphorylated). Interacts with PDGFRA (tyrosine phosphorylated). Interacts with CSF1R. Interacts (via SH2 and SH3 domain) with TNK2. Interacts (via protein kinase domain) with the tyrosine phosphorylated form of RUNX3 (via runt domain). Interacts with TRAF3 (via RING-type zinc finger domain). Interacts with RIGI, MAVS and TBK1. Interacts (via SH2 domain) with RACK1; the interaction is enhanced by tyrosine phosphorylation of RACK1 and inhibits SRC activity. Interacts with EPHB1; activates the MAPK/ERK cascade to regulate cell migration. Interacts with FCAMR. Interacts (via SH2 domain) with the 'Tyr-9' phosphorylated form of PDPK1. Interacts with AMOTL2; this interaction regulates the translocation of phosphorylated SRC to peripheral cell-matrix adhesion sites. Interacts with TRAP1. Interacts with CBLC; the interaction is enhanced when SRC is phosphorylated at Tyr-419. Interacts with ARHGEF5. Interacts (via cytoplasmic domain) with CEACAM1 (via SH2 domain); this interaction is regulated by trans-homophilic cell adhesion. Interacts with MPP2. Interacts with PRR7. Interacts (via kinase domain and to a lesser extent the SH2 domain) directly with PDLIM4; this interaction results in PTPN13-mediated dephosphorylation of this protein leading to its inactivation. Interacts with P85 (PIK3R1 or PIK3R2). Interacts with HNRNPA2B1. Interacts with IL6ST/gp130. Interacts (via SH3 domain) with PELP1 in the presence of 17-beta-estradiol. Interacts with AMBRA1. In terms of assembly, (Microbial infection) Interacts with HEV ORF3 protein; via the SH3 domain. (Microbial infection) Interacts (via SH2 domain) with HCV non-structural protein 5A (via N-terminus). Post-translationally, myristoylated at Gly-2, and this is essential for targeting to membranes. Dephosphorylated at Tyr-530 by PTPRJ. Phosphorylated on Tyr-530 by c-Src kinase (CSK). The phosphorylated form is termed pp60c-src. Dephosphorylated by PTPRJ at Tyr-419. Normally maintained in an inactive conformation with the SH2 domain engaged with Tyr-530, the SH3 domain engaged with the SH2-kinase linker, and Tyr-419 dephosphorylated. Dephosphorylation of Tyr-530 as a result of protein tyrosine phosphatase (PTP) action disrupts the intramolecular interaction between the SH2 domain and Tyr-530, Tyr-419 can then become autophosphorylated, resulting in SRC activation. Phosphorylation of Tyr-530 by CSK allows this interaction to reform, resulting in SRC inactivation. CDK5-mediated phosphorylation at Ser-75 targets SRC to ubiquitin-dependent degradation and thus leads to cytoskeletal reorganization. Phosphorylated by PTK2/FAK1; this enhances kinase activity. Phosphorylated by PTK2B/PYK2; this enhances kinase activity. Upon activation of IL6ST by IL6, Tyr-419 is phosphorylated and Tyr-530 dephosphorylated. In terms of processing, displays reduced levels of autophosphorylation at Tyr-419 compared to isoforms 2 and 3. Post-translationally, displays enhanced levels of autophosphorylation at Tyr-419 compared to isoform 1. Displays enhanced levels of autophosphorylation at Tyr-419 compared to isoform 1. Shows reduced phosphorylation at Tyr-527 compared to isoforms 1 and 2. In terms of processing, S-nitrosylation is important for activation of its kinase activity. Post-translationally, ubiquitinated in response to CDK5-mediated phosphorylation. Ubiquitination mediated by CBLC requires SRC autophosphorylation at Tyr-419 and may lead to lysosomal degradation. As to expression, expressed ubiquitously. Expressed in the skin (at protein level). Platelets, neurons and osteoclasts express 5-fold to 200-fold higher levels than most other tissues. In terms of tissue distribution, expressed in spleen and liver. Expressed in brain.

It is found in the cell membrane. The protein resides in the mitochondrion inner membrane. The protein localises to the nucleus. Its subcellular location is the cytoplasm. It localises to the cytoskeleton. It is found in the perinuclear region. The protein resides in the cell junction. The protein localises to the focal adhesion. It carries out the reaction L-tyrosyl-[protein] + ATP = O-phospho-L-tyrosyl-[protein] + ADP + H(+). With respect to regulation, phosphorylation by CSK at Tyr-530 inhibits kinase activity. Inhibitory phosphorylation at Tyr-530 is enhanced by heme. Further phosphorylation by CDK1 partially reactivates CSK-inactivated SRC and facilitates complete reactivation by protein tyrosine phosphatase PTPRC. Integrin engagement stimulates kinase activity. Phosphorylation by PTK2/FAK1 enhances kinase activity. Butein and pseudosubstrate-based peptide inhibitors like CIYKYYF act as inhibitors. Phosphorylation at Tyr-419 increases kinase activity. Its function is as follows. Non-receptor protein tyrosine kinase which is activated following engagement of many different classes of cellular receptors including immune response receptors, integrins and other adhesion receptors, receptor protein tyrosine kinases, G protein-coupled receptors as well as cytokine receptors. Participates in signaling pathways that control a diverse spectrum of biological activities including gene transcription, immune response, cell adhesion, cell cycle progression, apoptosis, migration, and transformation. Due to functional redundancy between members of the SRC kinase family, identification of the specific role of each SRC kinase is very difficult. SRC appears to be one of the primary kinases activated following engagement of receptors and plays a role in the activation of other protein tyrosine kinase (PTK) families. Receptor clustering or dimerization leads to recruitment of SRC to the receptor complexes where it phosphorylates the tyrosine residues within the receptor cytoplasmic domains. Plays an important role in the regulation of cytoskeletal organization through phosphorylation of specific substrates such as AFAP1. Phosphorylation of AFAP1 allows the SRC SH2 domain to bind AFAP1 and to localize to actin filaments. Cytoskeletal reorganization is also controlled through the phosphorylation of cortactin (CTTN). When cells adhere via focal adhesions to the extracellular matrix, signals are transmitted by integrins into the cell resulting in tyrosine phosphorylation of a number of focal adhesion proteins, including PTK2/FAK1 and paxillin (PXN). In addition to phosphorylating focal adhesion proteins, SRC is also active at the sites of cell-cell contact adherens junctions and phosphorylates substrates such as beta-catenin (CTNNB1), delta-catenin (CTNND1), and plakoglobin (JUP). Another type of cell-cell junction, the gap junction, is also a target for SRC, which phosphorylates connexin-43 (GJA1). SRC is implicated in regulation of pre-mRNA-processing and phosphorylates RNA-binding proteins such as KHDRBS1. Phosphorylates PKP3 at 'Tyr-195' in response to reactive oxygen species, which may cause the release of PKP3 from desmosome cell junctions into the cytoplasm. Also plays a role in PDGF-mediated tyrosine phosphorylation of both STAT1 and STAT3, leading to increased DNA binding activity of these transcription factors. Involved in the RAS pathway through phosphorylation of RASA1 and RASGRF1. Plays a role in EGF-mediated calcium-activated chloride channel activation. Required for epidermal growth factor receptor (EGFR) internalization through phosphorylation of clathrin heavy chain (CLTC and CLTCL1) at 'Tyr-1477'. Involved in beta-arrestin (ARRB1 and ARRB2) desensitization through phosphorylation and activation of GRK2, leading to beta-arrestin phosphorylation and internalization. Has a critical role in the stimulation of the CDK20/MAPK3 mitogen-activated protein kinase cascade by epidermal growth factor. Might be involved not only in mediating the transduction of mitogenic signals at the level of the plasma membrane but also in controlling progression through the cell cycle via interaction with regulatory proteins in the nucleus. Plays an important role in osteoclastic bone resorption in conjunction with PTK2B/PYK2. Both the formation of a SRC-PTK2B/PYK2 complex and SRC kinase activity are necessary for this function. Recruited to activated integrins by PTK2B/PYK2, thereby phosphorylating CBL, which in turn induces the activation and recruitment of phosphatidylinositol 3-kinase to the cell membrane in a signaling pathway that is critical for osteoclast function. Promotes energy production in osteoclasts by activating mitochondrial cytochrome C oxidase. Phosphorylates DDR2 on tyrosine residues, thereby promoting its subsequent autophosphorylation. Phosphorylates RUNX3 and COX2 on tyrosine residues, TNK2 on 'Tyr-284' and CBL on 'Tyr-731'. Enhances RIGI-elicited antiviral signaling. Phosphorylates PDPK1 at 'Tyr-9', 'Tyr-373' and 'Tyr-376'. Phosphorylates BCAR1 at 'Tyr-128'. Phosphorylates CBLC at multiple tyrosine residues, phosphorylation at 'Tyr-341' activates CBLC E3 activity. Phosphorylates synaptic vesicle protein synaptophysin (SYP). Involved in anchorage-independent cell growth. Required for podosome formation. Mediates IL6 signaling by activating YAP1-NOTCH pathway to induce inflammation-induced epithelial regeneration. Phosphorylates OTUB1, promoting deubiquitination of RPTOR. Phosphorylates caspase CASP8 at 'Tyr-380' which negatively regulates CASP8 processing and activation, down-regulating CASP8 proapoptotic function. Non-receptor protein tyrosine kinase which phosphorylates synaptophysin with high affinity. In terms of biological role, non-receptor protein tyrosine kinase which shows higher basal kinase activity than isoform 1, possibly due to weakened intramolecular interactions which enhance autophosphorylation of Tyr-419 and subsequent activation. The SH3 domain shows reduced affinity with the linker sequence between the SH2 and kinase domains which may account for the increased basal activity. Displays altered substrate specificity compared to isoform 1, showing weak affinity for synaptophysin and for peptide substrates containing class I or class II SH3 domain-binding motifs. Plays a role in L1CAM-mediated neurite elongation, possibly by acting downstream of L1CAM to drive cytoskeletal rearrangements involved in neurite outgrowth. Functionally, non-receptor protein tyrosine kinase which shows higher basal kinase activity than isoform 1, possibly due to weakened intramolecular interactions which enhance autophosphorylation of Tyr-419 and subsequent activation. The SH3 domain shows reduced affinity with the linker sequence between the SH2 and kinase domains which may account for the increased basal activity. Displays altered substrate specificity compared to isoform 1, showing weak affinity for synaptophysin and for peptide substrates containing class I or class II SH3 domain-binding motifs. Plays a role in neurite elongation. The chain is Proto-oncogene tyrosine-protein kinase Src from Homo sapiens (Human).